The chain runs to 406 residues: Argininosuccinate synthase (406 aa).

ATP-binding positions include 14-22 (AYSGGLDTS) and Ala-41. L-citrulline-binding residues include Tyr-92 and Ser-97. ATP is bound at residue Gly-122. Thr-124, Asn-128, and Asp-129 together coordinate L-aspartate. Asn-128 is a binding site for L-citrulline. Residues Arg-132, Ser-181, Ser-190, Glu-266, and Tyr-278 each contribute to the L-citrulline site.

It belongs to the argininosuccinate synthase family. Type 1 subfamily. In terms of assembly, homotetramer.

Its subcellular location is the cytoplasm. The catalysed reaction is L-citrulline + L-aspartate + ATP = 2-(N(omega)-L-arginino)succinate + AMP + diphosphate + H(+). It participates in amino-acid biosynthesis; L-arginine biosynthesis; L-arginine from L-ornithine and carbamoyl phosphate: step 2/3. The sequence is that of Argininosuccinate synthase from Geobacter sulfurreducens (strain ATCC 51573 / DSM 12127 / PCA).